The sequence spans 291 residues: Acetyl-coenzyme A carboxylase carboxyl transferase subunit beta (291 aa).

In terms of domain architecture, CoA carboxyltransferase N-terminal spans 29–291; it reads IMTKCPDCKK…TGGDLEWLEN (263 aa). Zn(2+)-binding residues include cysteine 33, cysteine 36, cysteine 52, and cysteine 55. A C4-type zinc finger spans residues 33 to 55; it reads CPDCKKIMLTKELDKNLRVCMNC.

It belongs to the AccD/PCCB family. Acetyl-CoA carboxylase is a heterohexamer composed of biotin carboxyl carrier protein (AccB), biotin carboxylase (AccC) and two subunits each of ACCase subunit alpha (AccA) and ACCase subunit beta (AccD). The cofactor is Zn(2+).

Its subcellular location is the cytoplasm. It carries out the reaction N(6)-carboxybiotinyl-L-lysyl-[protein] + acetyl-CoA = N(6)-biotinyl-L-lysyl-[protein] + malonyl-CoA. It participates in lipid metabolism; malonyl-CoA biosynthesis; malonyl-CoA from acetyl-CoA: step 1/1. Its function is as follows. Component of the acetyl coenzyme A carboxylase (ACC) complex. Biotin carboxylase (BC) catalyzes the carboxylation of biotin on its carrier protein (BCCP) and then the CO(2) group is transferred by the transcarboxylase to acetyl-CoA to form malonyl-CoA. The polypeptide is Acetyl-coenzyme A carboxylase carboxyl transferase subunit beta (Bacillus licheniformis (strain ATCC 14580 / DSM 13 / JCM 2505 / CCUG 7422 / NBRC 12200 / NCIMB 9375 / NCTC 10341 / NRRL NRS-1264 / Gibson 46)).